Here is a 185-residue protein sequence, read N- to C-terminus: NEDD8-conjugating enzyme UBE2F (185 aa).

The segment at 1-29 (MLTLASKLKRDDGVKGSRTSSTTSDSTRR) is disordered. An interaction with uba3 region spans residues 1-29 (MLTLASKLKRDDGVKGSRTSSTTSDSTRR). The UBC core domain occupies 32–185 (VRDRLLVKEV…VEDYIKRYAR (154 aa)). The Glycyl thioester intermediate role is filled by C116.

It belongs to the ubiquitin-conjugating enzyme family. UBE2F subfamily.

It carries out the reaction [E1 NEDD8-activating enzyme]-S-[NEDD8 protein]-yl-L-cysteine + [E2 NEDD8-conjugating enzyme]-L-cysteine = [E1 NEDD8-activating enzyme]-L-cysteine + [E2 NEDD8-conjugating enzyme]-S-[NEDD8-protein]-yl-L-cysteine.. Its pathway is protein modification; protein neddylation. Accepts the ubiquitin-like protein NEDD8 from the UBA3-NAE1 E1 complex and catalyzes its covalent attachment to other proteins. Together with the E3 ubiquitin ligase rnf7/rbx2, specifically neddylates cullin-5 (cul5). Does not neddylate cul1, cul2, cul3, cul4a or cul4b. This Xenopus tropicalis (Western clawed frog) protein is NEDD8-conjugating enzyme UBE2F (ube2f).